The following is a 213-amino-acid chain: Small ribosomal subunit protein uS5 (213 aa).

Residues 49–112 (LEEEVMDVNL…DNAKYNLIKV (64 aa)) enclose the S5 DRBM domain.

The protein belongs to the universal ribosomal protein uS5 family. Part of the 30S ribosomal subunit. Contacts protein S4.

In terms of biological role, with S4 and S12 plays an important role in translational accuracy. The sequence is that of Small ribosomal subunit protein uS5 from Methanobrevibacter smithii (strain ATCC 35061 / DSM 861 / OCM 144 / PS).